The sequence spans 393 residues: Beta-1,4-galactosyltransferase 3 (393 aa).

Residues 1–10 (MLRRLLERPC) are Cytoplasmic-facing. The helical; Signal-anchor for type II membrane protein transmembrane segment at 11-31 (TLALLVGSQLAVMMYLSLGGF) threads the bilayer. At 32–393 (RSLSALFGRD…ANHTALRGSH (362 aa)) the chain is on the lumenal side. A glycan (N-linked (GlcNAc...) asparagine) is linked at Asn-57. Cys-77 and Cys-119 are joined by a disulfide. 130–134 (PHRAR) is a UDP-alpha-D-galactose binding site. A glycan (N-linked (GlcNAc...) asparagine) is linked at Asn-166. Residues 169 to 171 (FNR), 196 to 197 (VD), Tyr-226, and Trp-258 contribute to the UDP-alpha-D-galactose site. A disulfide bridge connects residues Cys-190 and Cys-209. Asp-197 contacts Mn(2+). 260 to 263 (GEDD) lines the N-acetyl-D-glucosamine pocket. His-291 provides a ligand contact to Mn(2+). 291–293 (HRG) is a UDP-alpha-D-galactose binding site. An N-acetyl-D-glucosamine-binding site is contributed by Arg-303. N-linked (GlcNAc...) asparagine glycosylation is found at Asn-337 and Asn-385. A disordered region spans residues 339 to 393 (TADIGTDPRGPRAPSGPRYPPGSSQAFRQEMLQRRPPARPGPPPTANHTALRGSH).

This sequence belongs to the glycosyltransferase 7 family. It depends on Mn(2+) as a cofactor.

The protein localises to the golgi apparatus. It localises to the golgi stack membrane. It carries out the reaction an N-acetyl-beta-D-glucosaminyl derivative + UDP-alpha-D-galactose = a beta-D-galactosyl-(1-&gt;4)-N-acetyl-beta-D-glucosaminyl derivative + UDP + H(+). The enzyme catalyses N-acetyl-D-glucosamine + UDP-alpha-D-galactose = beta-D-galactosyl-(1-&gt;4)-N-acetyl-D-glucosamine + UDP + H(+). It catalyses the reaction a beta-D-GlcNAc-(1-&gt;3)-beta-D-Gal-(1-&gt;4)-beta-D-Glc-(1&lt;-&gt;1)-Cer(d18:1(4E)) + UDP-alpha-D-galactose = a neolactoside nLc4Cer(d18:1(4E)) + UDP + H(+). The catalysed reaction is a beta-D-glucosylceramide + UDP-alpha-D-galactose = a beta-D-galactosyl-(1-&gt;4)-beta-D-glucosyl-(1&lt;-&gt;1)-ceramide + UDP + H(+). It carries out the reaction a neolactoside IV(3)-beta-GlcNAc-nLc4Cer + UDP-alpha-D-galactose = a neolactoside nLc6Cer + UDP + H(+). It functions in the pathway protein modification; protein glycosylation. Its function is as follows. Responsible for the synthesis of complex-type N-linked oligosaccharides in many glycoproteins as well as the carbohydrate moieties of glycolipids. This Pongo abelii (Sumatran orangutan) protein is Beta-1,4-galactosyltransferase 3 (B4GALT3).